Consider the following 615-residue polypeptide: Dihydroxy-acid dehydratase (615 aa).

Position 81 (Asp81) interacts with Mg(2+). Cys122 lines the [2Fe-2S] cluster pocket. Asp123 and Lys124 together coordinate Mg(2+). At Lys124 the chain carries N6-carboxylysine. Cys195 contacts [2Fe-2S] cluster. Mg(2+) is bound at residue Glu491. Catalysis depends on Ser517, which acts as the Proton acceptor.

This sequence belongs to the IlvD/Edd family. Homodimer. It depends on [2Fe-2S] cluster as a cofactor. Mg(2+) is required as a cofactor.

It catalyses the reaction (2R)-2,3-dihydroxy-3-methylbutanoate = 3-methyl-2-oxobutanoate + H2O. The enzyme catalyses (2R,3R)-2,3-dihydroxy-3-methylpentanoate = (S)-3-methyl-2-oxopentanoate + H2O. The protein operates within amino-acid biosynthesis; L-isoleucine biosynthesis; L-isoleucine from 2-oxobutanoate: step 3/4. Its pathway is amino-acid biosynthesis; L-valine biosynthesis; L-valine from pyruvate: step 3/4. Functionally, functions in the biosynthesis of branched-chain amino acids. Catalyzes the dehydration of (2R,3R)-2,3-dihydroxy-3-methylpentanoate (2,3-dihydroxy-3-methylvalerate) into 2-oxo-3-methylpentanoate (2-oxo-3-methylvalerate) and of (2R)-2,3-dihydroxy-3-methylbutanoate (2,3-dihydroxyisovalerate) into 2-oxo-3-methylbutanoate (2-oxoisovalerate), the penultimate precursor to L-isoleucine and L-valine, respectively. The sequence is that of Dihydroxy-acid dehydratase from Novosphingobium aromaticivorans (strain ATCC 700278 / DSM 12444 / CCUG 56034 / CIP 105152 / NBRC 16084 / F199).